The sequence spans 467 residues: Metal transporter cnnm-4 (467 aa).

Residues 1–110 are Extracellular-facing; sequence MELYAAGRYD…EIPEGKDKTR (110 aa). N-linked (GlcNAc...) asparagine glycosylation occurs at Asn61. The CNNM transmembrane domain maps to 107-293; the sequence is DKTRVYFMMP…LEDEEAADGN (187 aa). A helical membrane pass occupies residues 111–131; sequence VYFMMPLLVLCLGLSATFSGL. Residues 132–170 are Cytoplasmic-facing; the sequence is NLAIMSFSINDLKLIQESDSDKLMKQRAMDVMRLRRNSN. Residues 171–191 form a helical membrane-spanning segment; sequence FVLVTIIFGNCFCNISITLLM. Over 192–196 the chain is Extracellular; the sequence is NYFAE. Residues 197–217 traverse the membrane as a helical segment; it reads FYGFGGFIFVELISTALLLIF. Residues 218 to 238 lie on the Cytoplasmic side of the membrane; the sequence is TEILPSLIFTKNALAIASRLQ. Residues 239–259 traverse the membrane as a helical segment; sequence YFVIFTMCITSPISYPLAMLL. Residues 260–467 lie on the Extracellular side of the membrane; it reads NIILGKENAD…IFDEKDARQE (208 aa). CBS domains are found at residues 317–381 and 394–461; these read MTEI…GSDT and KRRK…IFDE. Residue Asn364 is glycosylated (N-linked (GlcNAc...) asparagine).

This sequence belongs to the ACDP family.

It is found in the cell membrane. Its function is as follows. Probable metal transporter. Probably acts redundantly with the other metal transport proteins cnnm-1, cnnm-2, cnnm-3 and cnnm-5 to regulate Mg(2+) homeostasis. The protein is Metal transporter cnnm-4 of Caenorhabditis elegans.